The sequence spans 338 residues: uncharacterized protein (338 aa).

Positions 1 to 29 are cleaved as a signal peptide; that stretch reads MIKQLYKNITICSLAISTALTVFPATSYA.

Belongs to the aerolysin family.

This is an uncharacterized protein from Staphylococcus aureus (strain Mu50 / ATCC 700699).